Consider the following 225-residue polypeptide: MNSIEFPLLDRTTPISVISTTSNDLSNWSRLSSLWPLLYGTSCCFIEFASLIGSRFDFDRYGLVPRSSPRQADLILTAGTVTMKMAPSLVRLYEQMPEQKYVIAMGACTITGGMFSTDSYSTVRGVDKLIPVDVYLPGCPPKPEAIIDAITKLRKKISREIYEDRIRSQQGNRCFTTNHKFHIGRTTNTGNYDQGLLYQPPSTSKIAPEAFFKYKKSVSSSELVN.

Cys43, Cys44, Cys108, and Cys139 together coordinate [4Fe-4S] cluster.

It belongs to the complex I 20 kDa subunit family. As to quaternary structure, NDH is composed of at least 16 different subunits, 5 of which are encoded in the nucleus. [4Fe-4S] cluster serves as cofactor.

It is found in the plastid. Its subcellular location is the chloroplast thylakoid membrane. It catalyses the reaction a plastoquinone + NADH + (n+1) H(+)(in) = a plastoquinol + NAD(+) + n H(+)(out). The enzyme catalyses a plastoquinone + NADPH + (n+1) H(+)(in) = a plastoquinol + NADP(+) + n H(+)(out). In terms of biological role, NDH shuttles electrons from NAD(P)H:plastoquinone, via FMN and iron-sulfur (Fe-S) centers, to quinones in the photosynthetic chain and possibly in a chloroplast respiratory chain. The immediate electron acceptor for the enzyme in this species is believed to be plastoquinone. Couples the redox reaction to proton translocation, and thus conserves the redox energy in a proton gradient. This Populus alba (White poplar) protein is NAD(P)H-quinone oxidoreductase subunit K, chloroplastic.